The sequence spans 100 residues: Nucleoid-associated protein Caur_0522 (100 aa).

This sequence belongs to the YbaB/EbfC family. As to quaternary structure, homodimer.

The protein resides in the cytoplasm. The protein localises to the nucleoid. Binds to DNA and alters its conformation. May be involved in regulation of gene expression, nucleoid organization and DNA protection. The protein is Nucleoid-associated protein Caur_0522 of Chloroflexus aurantiacus (strain ATCC 29366 / DSM 635 / J-10-fl).